The following is a 339-amino-acid chain: Protein-glutamate methylesterase/protein-glutamine glutaminase (339 aa).

Residues 2 to 119 (RIGVVNDMPM…EGNASSQSAR (118 aa)) enclose the Response regulatory domain. The residue at position 53 (Asp53) is a 4-aspartylphosphate. A CheB-type methylesterase domain is found at 149–338 (PTPRRLIAIG…SRIIEACERS (190 aa)). Catalysis depends on residues Ser160, His187, and Asp280.

The protein belongs to the CheB family. Post-translationally, phosphorylated by CheA. Phosphorylation of the N-terminal regulatory domain activates the methylesterase activity.

It localises to the cytoplasm. It catalyses the reaction [protein]-L-glutamate 5-O-methyl ester + H2O = L-glutamyl-[protein] + methanol + H(+). It carries out the reaction L-glutaminyl-[protein] + H2O = L-glutamyl-[protein] + NH4(+). In terms of biological role, involved in chemotaxis. Part of a chemotaxis signal transduction system that modulates chemotaxis in response to various stimuli. Catalyzes the demethylation of specific methylglutamate residues introduced into the chemoreceptors (methyl-accepting chemotaxis proteins or MCP) by CheR. Also mediates the irreversible deamidation of specific glutamine residues to glutamic acid. The protein is Protein-glutamate methylesterase/protein-glutamine glutaminase of Mesorhizobium japonicum (strain LMG 29417 / CECT 9101 / MAFF 303099) (Mesorhizobium loti (strain MAFF 303099)).